A 132-amino-acid polypeptide reads, in one-letter code: Replication enhancer protein (132 aa).

This sequence belongs to the geminiviridae replication enhancer protein family. In terms of assembly, homooligomer. Interacts with the replication-associated protein (REP). Interacts with host proliferating cell nuclear antigen (PCNA). Interacts with host retinoblastoma-related protein 1 (RBR1), and may thereby deregulate the host cell cycle. Oligomerization and interaction with PCNA are necessary for optimal replication enhancement.

Increases viral DNA accumulation. Enhances infectivity and symptom expression. This is Replication enhancer protein from Cabbage leaf curl virus (isolate Jamaica) (CaLCuV).